The following is a 366-amino-acid chain: Aminomethyltransferase (366 aa).

It belongs to the GcvT family. The glycine cleavage system is composed of four proteins: P, T, L and H.

The enzyme catalyses N(6)-[(R)-S(8)-aminomethyldihydrolipoyl]-L-lysyl-[protein] + (6S)-5,6,7,8-tetrahydrofolate = N(6)-[(R)-dihydrolipoyl]-L-lysyl-[protein] + (6R)-5,10-methylene-5,6,7,8-tetrahydrofolate + NH4(+). The glycine cleavage system catalyzes the degradation of glycine. The chain is Aminomethyltransferase from Bacillus cereus (strain B4264).